Consider the following 562-residue polypeptide: Nicotinate phosphoribosyltransferase (562 aa).

Residues Tyr-36, Phe-183, and Thr-225 each contribute to the nicotinate site. His-228 is subject to Phosphohistidine. Thr-397 is a binding site for 5-phospho-alpha-D-ribose 1-diphosphate.

It belongs to the NAPRTase family. Mg(2+) serves as cofactor. Requires Mn(2+) as cofactor. In terms of processing, transiently phosphorylated on a His residue during the reaction cycle. Phosphorylation strongly increases the affinity for substrates and increases the rate of nicotinate D-ribonucleotide production. Dephosphorylation regenerates the low-affinity form of the enzyme, leading to product release.

It catalyses the reaction nicotinate + 5-phospho-alpha-D-ribose 1-diphosphate + ATP + H2O = nicotinate beta-D-ribonucleotide + ADP + phosphate + diphosphate. It participates in cofactor biosynthesis; NAD(+) biosynthesis; nicotinate D-ribonucleotide from nicotinate: step 1/1. Its function is as follows. Catalyzes the first step in the biosynthesis of NAD from nicotinic acid, the ATP-dependent synthesis of beta-nicotinate D-ribonucleotide from nicotinate and 5-phospho-D-ribose 1-phosphate. Helps prevent cellular oxidative stress via its role in NAD biosynthesis. The sequence is that of Nicotinate phosphoribosyltransferase from Caenorhabditis elegans.